The chain runs to 453 residues: uncharacterized protein (453 aa).

2 disordered regions span residues 140–161 and 311–332; these read YGESKRKRSKRSSKPLPGTRPQ and TTTRQPNFDKTKTPATMPSASS.

This is an uncharacterized protein from Caenorhabditis elegans.